The following is a 741-amino-acid chain: uncharacterized protein (741 aa).

Residues 64–103 are a coiled coil; sequence VETLLCMLEQLTIRIEFLTKEIAQQEAAYKDIQNTQKSLV. A compositionally biased stretch (polar residues) spans 137 to 155; the sequence is FERQNRTAPLQSKVTTASL. Disordered stretches follow at residues 137–214, 280–318, and 330–364; these read FERQ…TGLP, RTYS…SKSS, and SVSS…FLTP. Composition is skewed to low complexity over residues 161–173 and 197–209; these read RTSM…ASRT and KSKS…KSLA. Positions 298-308 are enriched in polar residues; it reads SHLPNRTTEVP. Low complexity-rich tracts occupy residues 309–318 and 330–344; these read SISKQLSKSS and SVSS…TPQS. Residues 346–356 show a composition bias toward polar residues; sequence PRAQSASTETA. 499-506 is a binding site for ATP; sequence GPPGTGKT.

It belongs to the AAA ATPase family.

The protein resides in the cytoplasm. It localises to the nucleus. This is an uncharacterized protein from Schizosaccharomyces pombe (strain 972 / ATCC 24843) (Fission yeast).